The primary structure comprises 358 residues: Cyclin-dependent kinase 10 (358 aa).

The Protein kinase domain occupies 37-321 (FEKLNRIGEG…AGDCLESSYF (285 aa)). ATP-binding positions include 43–51 (IGEGTYGIV) and Lys66. The active-site Proton acceptor is Asp161. Thr194 carries the post-translational modification Phosphothreonine. Residues 332–358 (LMPTFPHHRNKRAAPAATEGQSKRCRP) are disordered.

This sequence belongs to the protein kinase superfamily. CMGC Ser/Thr protein kinase family. CDC2/CDKX subfamily. In terms of assembly, heterodimer with CCNQ, the interaction is required for kinase activity. Interacts with ETS2. Interacts with PRK2.

It is found in the cytoplasm. The protein localises to the cytoskeleton. Its subcellular location is the cilium basal body. The enzyme catalyses L-seryl-[protein] + ATP = O-phospho-L-seryl-[protein] + ADP + H(+). The catalysed reaction is L-threonyl-[protein] + ATP = O-phospho-L-threonyl-[protein] + ADP + H(+). Functionally, cyclin-dependent kinase that phosphorylates the transcription factor ETS2 (in vitro) and positively controls its proteasomal degradation (in cells). Involved in the regulation of actin cytoskeleton organization through the phosphorylation of actin dynamics regulators such as PKN2. Is a negative regulator of ciliogenesis through phosphorylation of PKN2 and promotion of RhoA signaling. The chain is Cyclin-dependent kinase 10 (Cdk10) from Rattus norvegicus (Rat).